Here is a 91-residue protein sequence, read N- to C-terminus: Ragulator complex protein LAMTOR5 homolog (91 aa).

It belongs to the LAMTOR5 family. As to quaternary structure, part of the Ragulator complex.

Its subcellular location is the cytoplasm. It localises to the lysosome. Functionally, regulator of the TOR pathway, a signaling cascade that promotes cell growth in response to growth factors, energy levels, and amino acids. As part of the Ragulator complex, may activate the TOR signaling cascade in response to amino acids. The chain is Ragulator complex protein LAMTOR5 homolog from Nematostella vectensis (Starlet sea anemone).